The chain runs to 402 residues: Phosphoglycerate kinase (402 aa).

Residues 24 to 26 (DFN), arginine 40, 63 to 66 (HFGR), arginine 122, and arginine 155 contribute to the substrate site. ATP-binding positions include lysine 206, glycine 297, glutamate 328, and 358-361 (GGDS).

The protein belongs to the phosphoglycerate kinase family. Monomer.

The protein localises to the cytoplasm. The enzyme catalyses (2R)-3-phosphoglycerate + ATP = (2R)-3-phospho-glyceroyl phosphate + ADP. Its pathway is carbohydrate degradation; glycolysis; pyruvate from D-glyceraldehyde 3-phosphate: step 2/5. This Prochlorococcus marinus (strain AS9601) protein is Phosphoglycerate kinase.